A 595-amino-acid polypeptide reads, in one-letter code: Methionine--tRNA ligase (595 aa).

Residues 11–21 (PYANGPRHIGH) carry the 'HIGH' region motif. Zn(2+)-binding residues include C143, C146, C156, and C159. A 'KMSKS' region motif is present at residues 350 to 354 (KFSSS). Residue S353 coordinates ATP.

The protein belongs to the class-I aminoacyl-tRNA synthetase family. MetG type 1 subfamily. As to quaternary structure, monomer. It depends on Zn(2+) as a cofactor.

It localises to the cytoplasm. It carries out the reaction tRNA(Met) + L-methionine + ATP = L-methionyl-tRNA(Met) + AMP + diphosphate. Functionally, is required not only for elongation of protein synthesis but also for the initiation of all mRNA translation through initiator tRNA(fMet) aminoacylation. The chain is Methionine--tRNA ligase from Nocardioides sp. (strain ATCC BAA-499 / JS614).